Here is a 309-residue protein sequence, read N- to C-terminus: ATP synthase gamma chain (309 aa).

This sequence belongs to the ATPase gamma chain family. F-type ATPases have 2 components, CF(1) - the catalytic core - and CF(0) - the membrane proton channel. CF(1) has five subunits: alpha(3), beta(3), gamma(1), delta(1), epsilon(1). CF(0) has three main subunits: a, b and c.

The protein resides in the cell membrane. In terms of biological role, produces ATP from ADP in the presence of a proton gradient across the membrane. The gamma chain is believed to be important in regulating ATPase activity and the flow of protons through the CF(0) complex. The protein is ATP synthase gamma chain of Salinispora tropica (strain ATCC BAA-916 / DSM 44818 / JCM 13857 / NBRC 105044 / CNB-440).